Reading from the N-terminus, the 171-residue chain is Protein-export protein SecB (171 aa).

It belongs to the SecB family. Homotetramer, a dimer of dimers. One homotetramer interacts with 1 SecA dimer.

The protein localises to the cytoplasm. Functionally, one of the proteins required for the normal export of preproteins out of the cell cytoplasm. It is a molecular chaperone that binds to a subset of precursor proteins, maintaining them in a translocation-competent state. It also specifically binds to its receptor SecA. The chain is Protein-export protein SecB from Gluconacetobacter diazotrophicus (strain ATCC 49037 / DSM 5601 / CCUG 37298 / CIP 103539 / LMG 7603 / PAl5).